We begin with the raw amino-acid sequence, 526 residues long: Cytochrome P450 monooxygeanse terK (526 aa).

Residues 21-43 form a helical membrane-spanning segment; the sequence is NWGQLTGALLFLAACTWIYLPAF. Residue cysteine 465 participates in heme binding.

It belongs to the cytochrome P450 family. Heme serves as cofactor.

Its subcellular location is the membrane. It functions in the pathway secondary metabolite biosynthesis. Its function is as follows. Cytochrome P450 monooxygeanse; part of the gene cluster that mediates the biosynthesis of terpendoles, indole-diterpene (IDT) mycotoxins including terpendole I, terpendole K, terpendole C, as well as the kinesin Eg5 inhibitor terpendole E. Terpendoles biosynthesis begins with the synthesis of geranylgeranyl diphosphate (GGPP) by a yet unidentified GGPP synthase. Condensation of indole-3-glycerol phosphate with GGPP by the prenyltransferase terC then forms 3-geranylgeranylindole (3-GGI), followed by epoxidation and cyclization of this intermediate (by the FAD-dependent monooxygeanse terM and the terpene cyclase terB) to form paspaline. The cytochrome monooxygenase terQ then hydroxylates paspalline at C-11 to yield terpendole E. The cytochrome monooxygenase terP converts terpendole E to 13-desoxyterpendole I, and terQ converts 13-desoxyterpendole I into terpendole I. TerF and terK are required for conversion of terpendole I to terpendole C which is further converted to terpendole K. This is Cytochrome P450 monooxygeanse terK from Tolypocladium album (Soil fungus).